The chain runs to 309 residues: Porphobilinogen deaminase (309 aa).

C242 carries the post-translational modification S-(dipyrrolylmethanemethyl)cysteine.

It belongs to the HMBS family. Monomer. Dipyrromethane is required as a cofactor.

It carries out the reaction 4 porphobilinogen + H2O = hydroxymethylbilane + 4 NH4(+). It participates in porphyrin-containing compound metabolism; protoporphyrin-IX biosynthesis; coproporphyrinogen-III from 5-aminolevulinate: step 2/4. Functionally, tetrapolymerization of the monopyrrole PBG into the hydroxymethylbilane pre-uroporphyrinogen in several discrete steps. This Hamiltonella defensa subsp. Acyrthosiphon pisum (strain 5AT) protein is Porphobilinogen deaminase.